Reading from the N-terminus, the 84-residue chain is UPF0473 protein CPF_2030 (84 aa).

Belongs to the UPF0473 family.

The sequence is that of UPF0473 protein CPF_2030 from Clostridium perfringens (strain ATCC 13124 / DSM 756 / JCM 1290 / NCIMB 6125 / NCTC 8237 / Type A).